The primary structure comprises 490 residues: Protein LMBR1L (490 aa).

The Extracellular portion of the chain corresponds to 1–21; sequence MEAPDYEVLSVREQLFHERIR. An interaction with LGB region spans residues 1-59; it reads MEAPDYEVLSVREQLFHERIRECIISTLLFATLYILCHIFLTRFKKPAEFTTVDDEDAT. The segment at 1-76 is LCN1-binding; the sequence is MEAPDYEVLS…LCTFTLAIAL (76 aa). Residues 22–42 traverse the membrane as a helical segment; sequence ECIISTLLFATLYILCHIFLT. At 43-66 the chain is on the cytoplasmic side; it reads RFKKPAEFTTVDDEDATVNKIALE. Residues 67-87 form a helical membrane-spanning segment; that stretch reads LCTFTLAIALGAVLLLPFSII. The Extracellular portion of the chain corresponds to 88-114; it reads SNEVLLSLPRNYYIQWLNGSLIHGLWN. The chain crosses the membrane as a helical span at residues 115 to 135; sequence LVFLFSNLSLIFLMPFAYFFT. Topologically, residues 136 to 154 are cytoplasmic; that stretch reads ESEGFAGSRRGVLGRVYET. The chain crosses the membrane as a helical span at residues 155–175; that stretch reads VVMLMLLTLLVLGMVWVASAI. Residues 176-196 are Extracellular-facing; the sequence is LDNNKASRESLYDFWEYYLPY. The helical transmembrane segment at 197-217 threads the bilayer; the sequence is LYSCISFLGVLLLLVCTPLGL. Residues 218 to 305 are Cytoplasmic-facing; sequence ARMFSVTGKL…NLGYPLAMLC (88 aa). The chain crosses the membrane as a helical span at residues 306–326; that stretch reads LLVLTGLSVLIVAIHILELLI. The Extracellular segment spans residues 327–350; that stretch reads DEAAMPRGMQDASLGQVSFSRLGS. A helical membrane pass occupies residues 351–371; sequence FGAVIQVALIFYLMVSSVVGF. At 372 to 388 the chain is on the cytoplasmic side; the sequence is YSSPLFRSLRPRWHDTA. Residues 389 to 409 form a helical membrane-spanning segment; the sequence is MTQIIGNCVCLLVLSSALPVF. Over 410–431 the chain is Extracellular; it reads SRTLGLTRFDLLGDFGRFNWLG. A helical membrane pass occupies residues 432–452; that stretch reads NFYIVFLYNAAFAGLTTLCLV. Topologically, residues 453–490 are cytoplasmic; the sequence is KTFTAAVRAELIRAFGLDRLPLPVSGFPPRASRKTQHQ.

This sequence belongs to the LIMR family. Dimer. Can also form higher oligomers. Interacts with LCN1; this interaction mediates the endocytosis of LCN1. Interacts with UBAC2, FAF2, VCP, AMFR, ZNRF3, CTNNB1, LRP6, GSK3A, GSK3B, FZD6, DVL2 and RNF43. Interaction with LGB and SCGB1A1 is controversial.

It localises to the cell membrane. Its subcellular location is the endoplasmic reticulum membrane. Plays an essential role in lymphocyte development by negatively regulating the canonical Wnt signaling pathway. In association with UBAC2 and E3 ubiquitin-protein ligase AMFR, promotes the ubiquitin-mediated degradation of CTNNB1 and Wnt receptors FZD6 and LRP6. LMBR1L stabilizes the beta-catenin destruction complex that is required for regulating CTNNB1 levels. Acts as a LCN1 receptor and can mediate its endocytosis. The chain is Protein LMBR1L (LMBR1L) from Pongo abelii (Sumatran orangutan).